The primary structure comprises 337 residues: MRVLGIETSCDETGIAIYDDKKGLLANQLYSQVKLHADYGGVVPELASRDHVRKTVPLIQAALKEAGLTASDIDAVAYTAGPGLVGALLVGATVGRSLAFAWNVPAIPVHHMEGHLLAPMLEDNPPDFPFVALLVSGGHTQLISVTGIGQYELLGESIDDAAGEAFDKTAKLLGLDYPGGPMLSKMASQGTAGRFVFPRPMTDRPGLDFSFSGLKTFAANTIRSNGDDEQTRADIARAFEDAVVDTLMIKCKRALESTGFKRLVMAGGVSANRTLRAKLAEMMQKRRGEVFYARPEFCTDNGAMIAYAGMVRFKAGVTADLGVTVRPRWPLAELPAA.

Residues His111 and His115 each contribute to the Fe cation site. Substrate-binding positions include 134–138, Asp167, Gly180, and Asn272; that span reads LVSGG. Fe cation is bound at residue Asp300.

Belongs to the KAE1 / TsaD family. Fe(2+) serves as cofactor.

It is found in the cytoplasm. The catalysed reaction is L-threonylcarbamoyladenylate + adenosine(37) in tRNA = N(6)-L-threonylcarbamoyladenosine(37) in tRNA + AMP + H(+). Its function is as follows. Required for the formation of a threonylcarbamoyl group on adenosine at position 37 (t(6)A37) in tRNAs that read codons beginning with adenine. Is involved in the transfer of the threonylcarbamoyl moiety of threonylcarbamoyl-AMP (TC-AMP) to the N6 group of A37, together with TsaE and TsaB. TsaD likely plays a direct catalytic role in this reaction. This is tRNA N6-adenosine threonylcarbamoyltransferase from Salmonella choleraesuis (strain SC-B67).